The primary structure comprises 246 residues: tRNA (guanine-N(1)-)-methyltransferase (246 aa).

Residues Gly-114 and Ile-134 to Leu-139 contribute to the S-adenosyl-L-methionine site.

Belongs to the RNA methyltransferase TrmD family. Homodimer.

The protein localises to the cytoplasm. The enzyme catalyses guanosine(37) in tRNA + S-adenosyl-L-methionine = N(1)-methylguanosine(37) in tRNA + S-adenosyl-L-homocysteine + H(+). Specifically methylates guanosine-37 in various tRNAs. In Coxiella burnetii (strain RSA 493 / Nine Mile phase I), this protein is tRNA (guanine-N(1)-)-methyltransferase.